A 292-amino-acid polypeptide reads, in one-letter code: Bifunctional protein FolD (292 aa).

NADP(+) contacts are provided by residues 169–171 (GRS) and S194.

Belongs to the tetrahydrofolate dehydrogenase/cyclohydrolase family. In terms of assembly, homodimer.

The catalysed reaction is (6R)-5,10-methylene-5,6,7,8-tetrahydrofolate + NADP(+) = (6R)-5,10-methenyltetrahydrofolate + NADPH. The enzyme catalyses (6R)-5,10-methenyltetrahydrofolate + H2O = (6R)-10-formyltetrahydrofolate + H(+). Its pathway is one-carbon metabolism; tetrahydrofolate interconversion. Functionally, catalyzes the oxidation of 5,10-methylenetetrahydrofolate to 5,10-methenyltetrahydrofolate and then the hydrolysis of 5,10-methenyltetrahydrofolate to 10-formyltetrahydrofolate. This chain is Bifunctional protein FolD, found in Nostoc punctiforme (strain ATCC 29133 / PCC 73102).